We begin with the raw amino-acid sequence, 46 residues long: Escargot/snail protein homolog (46 aa).

3 consecutive C2H2-type zinc fingers follow at residues 1–4, 9–30, and 36–46; these read HIAH, CKCP…IRTH, and SVCQHCNRAFA.

It belongs to the snail C2H2-type zinc-finger protein family.

Its subcellular location is the nucleus. The chain is Escargot/snail protein homolog from Lithobius forficatus (Centipede).